Consider the following 258-residue polypeptide: MSRRQVRRVGDSGSFPFVGALHSKSRSSPLLSVCLVLVGACLLIGYAYSGPGMFKSIREVSKITGDYSCTAEVQRAIPILKSAYGDSMRKVLHVGPETCSVVSSLLNEEETEAWGVEPYDVEDADSNCKSLLHKGLVRVADIKFPLPYRSKSFSLVIVSDALDYLSPRYLNKTVPELARVASDGVVLLAGNPGQQKAKGGELSKFGRPAKMRSSSWWIRFFSQTNLEENEAASKKFEQAASKSSYKPACQVFHLKPLH.

The Cytoplasmic segment spans residues 1 to 29 (MSRRQVRRVGDSGSFPFVGALHSKSRSSP). The chain crosses the membrane as a helical span at residues 30 to 50 (LLSVCLVLVGACLLIGYAYSG). Residues 51–258 (PGMFKSIREV…CQVFHLKPLH (208 aa)) lie on the Lumenal side of the membrane. N-linked (GlcNAc...) asparagine glycosylation is present at Asn171.

It belongs to the class I-like SAM-binding methyltransferase superfamily.

The protein localises to the golgi apparatus membrane. In terms of biological role, together with CGR2, required for homogalacturonan pectins (HG) methylesterification in the Golgi apparatus prior to integration into cell walls, essential for general growth and development. Promotes petiole elongation. Impacts photosynthesis and respiration efficiency by influencing leaf mesophyll morphology and physiology; pectin methylesterification modulates both expansion and positioning of cells in leaves, probably by changing cell walls plasticity. This is Probable pectin methylesterase CGR3 from Arabidopsis thaliana (Mouse-ear cress).